The primary structure comprises 171 residues: Putative auxin-responsive protein IAA29 (171 aa).

One can recognise a PB1 domain in the interval 19–114 (SRFVKVFMHG…TVKKIYIVPA (96 aa)). The segment at 117-171 (QNENDYQEEEEDNAAAAATADEDGDGAAADDGVAAAADDVDDVAGYTSNDDPSFD) is disordered. The segment covering 142-153 (GAAADDGVAAAA) has biased composition (low complexity). A compositionally biased stretch (polar residues) spans 162-171 (YTSNDDPSFD).

This sequence belongs to the Aux/IAA family. In terms of assembly, homodimers and heterodimers.

It is found in the nucleus. Its function is as follows. Aux/IAA proteins are short-lived transcriptional factors that function as repressors of early auxin response genes at low auxin concentrations. The chain is Putative auxin-responsive protein IAA29 (IAA29) from Oryza sativa subsp. japonica (Rice).